Reading from the N-terminus, the 216-residue chain is Early E3 25 kDa glycoprotein (216 aa).

Residues Asn25, Asn82, Asn97, Asn109, Asn142, Asn147, and Asn160 are each glycosylated (N-linked (GlcNAc...) asparagine; by host).

The polypeptide is Early E3 25 kDa glycoprotein (Canis lupus familiaris (Dog)).